Consider the following 157-residue polypeptide: 2-C-methyl-D-erythritol 2,4-cyclodiphosphate synthase (157 aa).

Residues Asp-8 and His-10 each coordinate a divalent metal cation. Residues 8–10 (DVH) and 34–35 (HS) contribute to the 4-CDP-2-C-methyl-D-erythritol 2-phosphate site. His-42 lines the a divalent metal cation pocket. 4-CDP-2-C-methyl-D-erythritol 2-phosphate-binding positions include 56-58 (DIG), 61-65 (FPDTD), 100-106 (AQAPKMA), 132-135 (TTTE), Phe-139, and Arg-142.

It belongs to the IspF family. Homotrimer. A divalent metal cation is required as a cofactor.

It carries out the reaction 4-CDP-2-C-methyl-D-erythritol 2-phosphate = 2-C-methyl-D-erythritol 2,4-cyclic diphosphate + CMP. Its pathway is isoprenoid biosynthesis; isopentenyl diphosphate biosynthesis via DXP pathway; isopentenyl diphosphate from 1-deoxy-D-xylulose 5-phosphate: step 4/6. Functionally, involved in the biosynthesis of isopentenyl diphosphate (IPP) and dimethylallyl diphosphate (DMAPP), two major building blocks of isoprenoid compounds. Catalyzes the conversion of 4-diphosphocytidyl-2-C-methyl-D-erythritol 2-phosphate (CDP-ME2P) to 2-C-methyl-D-erythritol 2,4-cyclodiphosphate (ME-CPP) with a corresponding release of cytidine 5-monophosphate (CMP). The protein is 2-C-methyl-D-erythritol 2,4-cyclodiphosphate synthase of Pseudomonas aeruginosa (strain UCBPP-PA14).